Here is a 525-residue protein sequence, read N- to C-terminus: Protein kinase PINOID 2 (525 aa).

The segment at 1–27 is disordered; sequence MANSSIFYKDNESDYESSTVGPDSSRR. Residues 87–465 form the Protein kinase domain; it reads FRLLKRLGSG…SIEIKRHEFF (379 aa). Residues 93–101 and Lys-118 contribute to the ATP site; that span reads LGSGDIGSV. Residue Asp-214 is the Proton acceptor of the active site. The region spanning 466 to 525 is the AGC-kinase C-terminal domain; it reads EGVNWALIRSIKPPWVPKEETSHKTKGDNRSVNYYLPPRFMMSRKERNEPYHVSNYFDYF.

It belongs to the protein kinase superfamily. Ser/Thr protein kinase family.

The enzyme catalyses L-seryl-[protein] + ATP = O-phospho-L-seryl-[protein] + ADP + H(+). It catalyses the reaction L-threonyl-[protein] + ATP = O-phospho-L-threonyl-[protein] + ADP + H(+). Its function is as follows. Serine/threonine-protein kinase involved in the regulation of auxin signaling. Plays a minor role in the regulation of cellular auxin efflux and cotyledon organogenesis. This Arabidopsis thaliana (Mouse-ear cress) protein is Protein kinase PINOID 2 (PID2).